The primary structure comprises 288 residues: Alpha/beta hydrolase domain-containing protein 17B (288 aa).

Catalysis depends on charge relay system residues Ser-170, Asp-235, and His-264.

Belongs to the AB hydrolase superfamily. ABHD17 family. Palmitoylated on cysteine residues located in a cysteine cluster at the N-terminus which promotes membrane localization.

It is found in the cell membrane. The protein resides in the recycling endosome membrane. It localises to the cell projection. Its subcellular location is the dendritic spine. The protein localises to the postsynaptic density membrane. It carries out the reaction S-hexadecanoyl-L-cysteinyl-[protein] + H2O = L-cysteinyl-[protein] + hexadecanoate + H(+). Its function is as follows. Hydrolyzes fatty acids from S-acylated cysteine residues in proteins. Has depalmitoylating activity towards nras. The sequence is that of Alpha/beta hydrolase domain-containing protein 17B from Xenopus laevis (African clawed frog).